The chain runs to 40 residues: U1-ectatotoxin-Eb1a subunit A (40 aa).

It belongs to the ectatomin family. Ectatomin-Eq subfamily. As to quaternary structure, heterodimer of subunits A and B; disulfide-linked. In terms of tissue distribution, expressed by the venom gland.

The protein resides in the secreted. It is found in the target cell membrane. The chain is U1-ectatotoxin-Eb1a subunit A from Ectatomma brunneum (Ant).